The following is a 235-amino-acid chain: Dual specificity protein phosphatase 15 (235 aa).

Gly2 is lipidated: N-myristoyl glycine. The 141-residue stretch at 4 to 144 (GMTKVLPGLY…LEEFGWANSQ (141 aa)) folds into the Tyrosine-protein phosphatase domain. Cys88 (phosphocysteine intermediate) is an active-site residue. Over residues 183-193 (AASATTASSAA) the composition is skewed to low complexity. The tract at residues 183-212 (AASATTASSAAEGTLQRLVPRSPRDSHQPL) is disordered.

This sequence belongs to the protein-tyrosine phosphatase family. Non-receptor class dual specificity subfamily. As to expression, isoform 1 is expressed in testis; predominantly in developing spermatocytes (at protein level). Isoform 2 is highly expressed in testis. Expressed in spinal cord and specifically in oligodendroglial cells. Expressed in embryonic brain cortex; down-regulated in mice with experimental autoimmune encephalomyelitis (EAE).

The protein resides in the cell membrane. It carries out the reaction O-phospho-L-tyrosyl-[protein] + H2O = L-tyrosyl-[protein] + phosphate. The catalysed reaction is O-phospho-L-seryl-[protein] + H2O = L-seryl-[protein] + phosphate. It catalyses the reaction O-phospho-L-threonyl-[protein] + H2O = L-threonyl-[protein] + phosphate. May dephosphorylate MAPK13, ATF2, ERBB3, PDGFRB and SNX6. Functionally, may play a role in the regulation of oligodendrocyte differentiation. May play a role in the regulation of myelin formation. Involved in the regulation of Erk1/2 phosphorylation in Schwann cells; the signaling may be linked to the regulation of myelination. This is Dual specificity protein phosphatase 15 from Mus musculus (Mouse).